A 400-amino-acid chain; its full sequence is Acetate kinase (400 aa).

N10 provides a ligand contact to Mg(2+). K17 provides a ligand contact to ATP. R91 serves as a coordination point for substrate. D150 serves as the catalytic Proton donor/acceptor. Residues 210–214 (HLGNG), 285–287 (DCR), and 333–337 (GIGEN) contribute to the ATP site. Mg(2+) is bound at residue E387.

It belongs to the acetokinase family. In terms of assembly, homodimer. Requires Mg(2+) as cofactor. Mn(2+) is required as a cofactor.

It is found in the cytoplasm. It catalyses the reaction acetate + ATP = acetyl phosphate + ADP. Its pathway is metabolic intermediate biosynthesis; acetyl-CoA biosynthesis; acetyl-CoA from acetate: step 1/2. Its function is as follows. Catalyzes the formation of acetyl phosphate from acetate and ATP. Can also catalyze the reverse reaction. The chain is Acetate kinase from Erwinia tasmaniensis (strain DSM 17950 / CFBP 7177 / CIP 109463 / NCPPB 4357 / Et1/99).